Consider the following 963-residue polypeptide: GPMGPSGPRGIPGPPGAPGPQGFASGPMGPRGPPGPPGKNGDDGEAGKPGRPGERGPPGPQGARGIPGTAGIPGMKGHRGFSGIDGAKGDAGPAGPKGEPGSPGENGAPGQMGPRGIPGERGRPGAPGPAGARGNDGATGAAGPPGPTGPAGPPGFPGAVGAKGEAGPQGARGSEGPQGVRGEPGPPGPAGAAGPAGNPGADGQPGAKGANGAPGIAGAPGFPGARGPSGPQGPSGPPGPKGNSGEPGAPGSKGDTGAKGEPGPTGIQGPPGPAGEEGKRGARGEPGPTGIPGPPGERGGPGARGFPGSDGVAGPKGPAGERGAPGPAGPKGSPGEAGRPGEAGIPGAKGITGSPGSPGPDGKTGPPGPAGQDGRPGPPGPPGARGQAGVMGFPGPKGAAGEPGKAGERGVPGPPGAVGPAGKDGEAGAQGPPGPAGPAGERGEQGPAGSPGIGAPGPSGARGERGFPGERGVQGPPGPAGPRGANGAPGNDGAKGIQGMPGERGAAGIPGPKGDRGDAGPKGADGSPGKDGVRGITGPIGPPGPAGAPGDKGESGPSGPAGPTGARGAPGDRGEPGPPGPAGFAGPPGADGQPGAKGEPGDAGAKGDAGPPGPAGPTGPPGPIGNVGAPGPKGARGSAGPPGATGFPGAAGRVGPPGPSGNAGPPGPPGPVGKEGGKGPRGETGPAGRPGEAGPPGPPGPAGEKGSPGADGPAGAPGTPGPQGIAGQRGVVGIPGQRGERGFPGIPGPSGEPGKQGPSGASGERGPPGPVGPPGIAGPPGESGREGAPGAEGSPGRDGSPGPKGDRGETGPAGPPGAPGAPGAPGPVGPAGKSGDRGETGPAGPAGPIGPVGARGPAGPQGPRGDKGETGEQGDRGIKGHRGFSGIQGPPGPPGSPGEQGPSGASGPAGPRGPPGSAGAPGKDGINGIPGPIGPPGPRGRTGDAGPVGPPGPPGPPGPPGPP.

Positions 1 to 963 (GPMGPSGPRG…PGPPGPPGPP (963 aa)) are disordered. Residues 40–54 (NGDDGEAGKPGRPGE) are compositionally biased toward basic and acidic residues. The residue at position 82 (Ser-82) is a Phosphoserine. 2 stretches are compositionally biased toward low complexity: residues 90 to 106 (DAGPAGPKGEPGSPGEN) and 129 to 142 (PAGARGNDGATGAA). Over residues 144–156 (PPGPTGPAGPPGF) the composition is skewed to pro residues. The segment covering 190-229 (AGAAGPAGNPGADGQPGAKGANGAPGIAGAPGFPGARGPS) has biased composition (low complexity). Gly residues predominate over residues 296 to 305 (GERGGPGARG). Low complexity-rich tracts occupy residues 313-337 (AGPKGPAGERGAPGPAGPKGSPGEA), 349-375 (KGITGSPGSPGPDGKTGPPGPAGQDGR), 384-403 (ARGQAGVMGFPGPKGAAGEP), 482-495 (PRGANGAPGNDGAK), 555-569 (SGPSGPAGPTGARGA), and 582-609 (AGFAGPPGADGQPGAKGEPGDAGAKGDA). Ser-558 is subject to Phosphoserine. Pro residues predominate over residues 611-623 (PPGPAGPTGPPGP). 3 stretches are compositionally biased toward low complexity: residues 638 to 654 (SAGPPGATGFPGAAGRV), 683 to 692 (ETGPAGRPGE), and 702 to 726 (AGEKGSPGADGPAGAPGTPGPQGIA). Pro residues-rich tracts occupy residues 767–777 (PPGPVGPPGIA) and 813–828 (AGPPGAPGAPGAPGPV). A compositionally biased stretch (low complexity) spans 849–863 (IGPVGARGPAGPQGP). Over residues 864–878 (RGDKGETGEQGDRGI) the composition is skewed to basic and acidic residues. Residues 897–930 (PGEQGPSGASGPAGPRGPPGSAGAPGKDGINGIP) are compositionally biased toward low complexity. Pro residues predominate over residues 948–963 (VGPPGPPGPPGPPGPP).

This sequence belongs to the fibrillar collagen family. In terms of assembly, trimers of one alpha 2(I) and two alpha 1(I) chains. Post-translationally, prolines at the third position of the tripeptide repeating unit (G-X-Y) are hydroxylated in some or all of the chains. Forms the fibrils of tendon, ligaments and bones. In bones, the fibrils are mineralized with calcium hydroxyapatite.

Its subcellular location is the secreted. The protein localises to the extracellular space. The protein resides in the extracellular matrix. In terms of biological role, type I collagen is a member of group I collagen (fibrillar forming collagen). This Tapirus terrestris (Lowland tapir) protein is Collagen alpha-1(I) chain.